A 180-amino-acid chain; its full sequence is uncharacterized protein (180 aa).

This is an uncharacterized protein from Methanocaldococcus jannaschii (strain ATCC 43067 / DSM 2661 / JAL-1 / JCM 10045 / NBRC 100440) (Methanococcus jannaschii).